The chain runs to 554 residues: Inactive sesquithujene synthase B (554 aa).

Residues Asp308 and Asp312 each contribute to the Mg(2+) site. Substrate contacts are provided by Asp308, Asp312, Arg449, and Asn452. The DDXXD motif signature appears at Asp308–Asp312. Mg(2+)-binding residues include Asn452, Ser456, and Glu460.

The protein belongs to the terpene synthase family. Monomer. It depends on Mg(2+) as a cofactor. Requires Mn(2+) as cofactor.

It is found in the cytoplasm. Its pathway is secondary metabolite biosynthesis; terpenoid biosynthesis. Functionally, non-functional sesquiterpene synthase having less than 1% of the activity found in TPS5A. The sequence is that of Inactive sesquithujene synthase B from Zea mays (Maize).